A 321-amino-acid chain; its full sequence is Glucokinase (321 aa).

8–13 (GDVGGT) serves as a coordination point for ATP.

Belongs to the bacterial glucokinase family.

It localises to the cytoplasm. It catalyses the reaction D-glucose + ATP = D-glucose 6-phosphate + ADP + H(+). This chain is Glucokinase, found in Shigella flexneri serotype 5b (strain 8401).